Reading from the N-terminus, the 471-residue chain is Pneumolysin (471 aa).

The next 4 membrane-spanning stretches (beta stranded) occupy residues 158–171 (MEQLKVKFGSDFEK), 178–187 (IDFNSVHSGE), 256–265 (SDEVEAAFEA), and 273–285 (APQTEWKQILDNT). A Conserved undecapeptide motif is present at residues 427-437 (ECTGLAWEWWR). A Cholesterol binding motif is present at residues 459–460 (TL).

The protein belongs to the cholesterol-dependent cytolysin family. Elongated monomers align along their lengths, indicating intersubunit contacts and suggesting the prepore structure. Modeling based on cryo-EM shows a homooligomeric pore complex containing 38-44 subunits; when inserted in the host membrane. The size of isolated pores is detergent-dependent; in amphipol A8-35 homogenous rings form with 42 subunits.

Its subcellular location is the secreted. It localises to the host cell membrane. With respect to regulation, erythrocytes hemolysis is inhibited by cholesterol. Its function is as follows. A cholesterol-dependent toxin that causes cytolysis by forming pores in cholesterol-containing host membranes. After binding to target membranes, the protein undergoes a major conformation change, leading to its insertion in the host membrane and formation of an oligomeric pore complex. Cholesterol is required for binding to host membranes, membrane insertion and pore formation; cholesterol binding is mediated by a Thr-Leu pair in the C-terminus. Can be reversibly inactivated by oxidation. The protein is Pneumolysin (ply) of Streptococcus pneumoniae serotype 2 (strain D39 / NCTC 7466).